The following is a 755-amino-acid chain: Metabotropic glutamate receptor-like protein B (755 aa).

The N-terminal stretch at 1–23 (MKNLISIILLILIFFNYSKFVKS) is a signal peptide. N-linked (GlcNAc...) asparagine glycosylation is found at Asn-16, Asn-183, and Asn-273. The Extracellular segment spans residues 24 to 385 (KNCKIAVLLS…VDYSSSMKLG (362 aa)). The chain crosses the membrane as a helical span at residues 386 to 406 (ITITSSICIFLCIISIIIVLV). Residues 407–417 (FRTARIIKSAS) lie on the Cytoplasmic side of the membrane. A helical membrane pass occupies residues 418-438 (PAFLFLILMGCILIFIGCIIF). The Extracellular segment spans residues 439–455 (SQSPNEGTCRARVWLLS). A helical membrane pass occupies residues 456-476 (IGYTIFLGSLLVKNWRIWLLF). Residues 477–492 (DNPKLKKRSITNWKLY) are Cytoplasmic-facing. A helical transmembrane segment spans residues 493–513 (PWVAGILAADVLILAFWQGLG). Residues 514 to 541 (NIRSESRIGIDSLTKYQYTNVCSSNDQG) lie on the Extracellular side of the membrane. Residues 542-562 (SIALYILLVFHGIKLLVACFI) form a helical membrane-spanning segment. Residues 563–578 (SFKIKVVDIDEFNESK) are Cytoplasmic-facing. Residues 579–599 (PIASSVYIITFCLFIVIPLMV) form a helical membrane-spanning segment. Over 600–607 (SPQSVTSQ) the chain is Extracellular. A helical transmembrane segment spans residues 608-628 (VTTICVCAIVTTLISIILLFG). The Cytoplasmic segment spans residues 629–755 (SKFYKMITQG…GEVEIDSNNL (127 aa)). 2 disordered regions span residues 656-676 (QSLE…EENG) and 691-729 (FSSD…NIEE). A compositionally biased stretch (acidic residues) spans 694-710 (DTEDDENETQQIDEEKD).

This sequence in the N-terminal section; belongs to the BMP lipoprotein family. The protein in the C-terminal section; belongs to the G-protein coupled receptor 3 family. GABA-B receptor subfamily.

The protein resides in the membrane. In Dictyostelium discoideum (Social amoeba), this protein is Metabotropic glutamate receptor-like protein B (grlB).